A 406-amino-acid polypeptide reads, in one-letter code: Argininosuccinate synthase (406 aa).

9–17 (AYSGGLDTS) provides a ligand contact to ATP. Tyr-86 lines the L-citrulline pocket. Gly-116 is a binding site for ATP. L-aspartate-binding residues include Thr-118, Asn-122, and Asp-123. Asn-122 provides a ligand contact to L-citrulline. Positions 126, 174, 183, 259, and 271 each coordinate L-citrulline.

The protein belongs to the argininosuccinate synthase family. Type 1 subfamily. Homotetramer.

The protein resides in the cytoplasm. The catalysed reaction is L-citrulline + L-aspartate + ATP = 2-(N(omega)-L-arginino)succinate + AMP + diphosphate + H(+). It participates in amino-acid biosynthesis; L-arginine biosynthesis; L-arginine from L-ornithine and carbamoyl phosphate: step 2/3. The polypeptide is Argininosuccinate synthase (Geobacillus thermodenitrificans (strain NG80-2)).